The chain runs to 294 residues: Elongation factor Ts (294 aa).

An involved in Mg(2+) ion dislocation from EF-Tu region spans residues 79–82 (TDFV).

It belongs to the EF-Ts family.

Its subcellular location is the cytoplasm. Functionally, associates with the EF-Tu.GDP complex and induces the exchange of GDP to GTP. It remains bound to the aminoacyl-tRNA.EF-Tu.GTP complex up to the GTP hydrolysis stage on the ribosome. This is Elongation factor Ts from Oceanobacillus iheyensis (strain DSM 14371 / CIP 107618 / JCM 11309 / KCTC 3954 / HTE831).